A 411-amino-acid polypeptide reads, in one-letter code: Heparan-sulfate 6-O-sulfotransferase 1 (411 aa).

Residues 1-19 (MRRRRAGGRTMVERASKFV) are Cytoplasmic-facing. The chain crosses the membrane as a helical; Signal-anchor for type II membrane protein span at residues 20–37 (LVVAGSACFMLILYQYAG). Residues 38-411 (PGLSLGAPGG…DYMSHIIEKW (374 aa)) are Lumenal-facing. 93 to 101 (HIQKTGGTT) provides a ligand contact to 3'-phosphoadenylyl sulfate. Residues 123–124 (KK), Arg-140, Trp-145, and His-150 contribute to the substrate site. The Proton acceptor role is filled by His-150. 3'-phosphoadenylyl sulfate contacts are provided by Arg-185 and Ser-193. Residues His-197 and Trp-204 each coordinate substrate. Residue Asn-264 is glycosylated (N-linked (GlcNAc...) asparagine). 317 to 319 (MQY) contributes to the 3'-phosphoadenylyl sulfate binding site. N-linked (GlcNAc...) asparagine glycosylation occurs at Asn-320. 323 to 324 (RA) lines the 3'-phosphoadenylyl sulfate pocket. The stretch at 352 to 386 (KDLFQQRYQYKRQLERREQRLRNREERLLHRSKEA) forms a coiled coil. The segment at 380–401 (LHRSKEALPREDPEEPGRVPTE) is disordered.

It belongs to the sulfotransferase 6 family. N-glycosylated. Expressed in fetal brain and liver.

Its subcellular location is the membrane. The catalysed reaction is alpha-D-glucosaminyl-[heparan sulfate](n) + 3'-phosphoadenylyl sulfate = 6-sulfo-alpha-D-glucosaminyl-[heparan sulfate](n) + adenosine 3',5'-bisphosphate + H(+). 6-O-sulfation enzyme which catalyzes the transfer of sulfate from 3'-phosphoadenosine 5'-phosphosulfate (PAPS) to position 6 of the N-sulfoglucosamine residue (GlcNS) of heparan sulfate. Critical for normal neuronal development where it may play a role in neuron branching. May also play a role in limb development. May prefer iduronic acid. The chain is Heparan-sulfate 6-O-sulfotransferase 1 from Mus musculus (Mouse).